A 535-amino-acid chain; its full sequence is EGF domain-specific O-linked N-acetylglucosamine transferase (535 aa).

Positions M1 to A16 are cleaved as a signal peptide. N-linked (GlcNAc...) asparagine glycans are attached at residues N22 and N271. The short motif at D303–D305 is the Required for optimal activity element. Residues N362 and N501 are each glycosylated (N-linked (GlcNAc...) asparagine).

The protein belongs to the glycosyltransferase 61 family.

Its subcellular location is the endoplasmic reticulum lumen. The enzyme catalyses L-seryl-[protein] + UDP-N-acetyl-alpha-D-glucosamine = 3-O-(N-acetyl-beta-D-glucosaminyl)-L-seryl-[protein] + UDP + H(+). It carries out the reaction L-threonyl-[protein] + UDP-N-acetyl-alpha-D-glucosamine = 3-O-(N-acetyl-beta-D-glucosaminyl)-L-threonyl-[protein] + UDP + H(+). Functionally, catalyzes the transfer of a single N-acetylglucosamine from UDP-GlcNAc to a serine or threonine residue in extracellular proteins resulting in their modification with a beta-linked N-acetylglucosamine (O-GlcNAc). Specifically glycosylates the Thr residue located between the fifth and sixth conserved cysteines of folded EGF-like domains. The protein is EGF domain-specific O-linked N-acetylglucosamine transferase (EOGT) of Gallus gallus (Chicken).